The chain runs to 109 residues: Fluoride-specific ion channel FluC (109 aa).

The next 3 helical transmembrane spans lie at 21–41 (FFLNNNLLVGVIGSFVYGFVI), 52–72 (ILLTGFCSCFTSFSGFVLFLY), and 83–103 (LFFYLNIIIVLNLIIMYAGFL).

This sequence belongs to the fluoride channel Fluc/FEX (TC 1.A.43) family.

The protein localises to the cell inner membrane. The catalysed reaction is fluoride(in) = fluoride(out). Fluoride-specific ion channel. Important for reducing fluoride concentration in the cell, thus reducing its toxicity. In Prochlorococcus marinus (strain MIT 9515), this protein is Fluoride-specific ion channel FluC.